We begin with the raw amino-acid sequence, 371 residues long: MREVNLLNRFTRQFLFLIVLVTQICGVATFVYNSKAQCFRQSGFLRFYSSLVLIFLALFLIVTTSKMFHNLQAVWPYVVGSVIILVVRIHGLLESAEIVELLNQMLRIMRQVNLMARHPNLFRLKHLLLLLLALQNLLRSLNTIVGISNHSAEAYDSFLNSVILLIILAVLLSFLLQITINICLFVVLIATYSELHHCTRRISNDMDKLRLHSVHESGQFMVLVKQLQGITEKLIRLRQNVFHITVRIIRHFRFHWLCAIIYGLLPFFSLTAKDQNGFNFLIISALNIIFQWTIFAILSRESRITRSLCTFHLTNYHKETARTIDELLHQEIWERITVTIYGNTLDTKLLFKLLSISAFCAFVNRLEYLHI.

The Cytoplasmic portion of the chain corresponds to Met1–Gln13. The helical transmembrane segment at Phe14–Ser34 threads the bilayer. The Extracellular portion of the chain corresponds to Lys35–Ser42. Residues Gly43 to Thr63 traverse the membrane as a helical segment. Residues Thr64–Gln72 are Cytoplasmic-facing. The chain crosses the membrane as a helical span at residues Ala73–Leu93. Residues Glu94–His126 are Extracellular-facing. A helical transmembrane segment spans residues Leu127–Ile147. The Cytoplasmic segment spans residues Ser148 to Ser161. Residues Val162 to Ile182 form a helical membrane-spanning segment. Residues Cys183–His251 are Extracellular-facing. The chain crosses the membrane as a helical span at residues Phe252–Ala272. The Cytoplasmic segment spans residues Lys273 to Gly277. Residues Phe278 to Leu298 traverse the membrane as a helical segment. At Ser299–Ile371 the chain is on the extracellular side.

The protein resides in the cell membrane. The polypeptide is Gustatory receptor-like 65a (Drosophila melanogaster (Fruit fly)).